The following is a 120-amino-acid chain: NAD(P)H-quinone oxidoreductase subunit 3, chloroplastic (120 aa).

3 helical membrane-spanning segments follow: residues 9-29 (IFWA…LISG), 64-84 (MFAL…PWAM), and 88-108 (VLGV…IVGS).

This sequence belongs to the complex I subunit 3 family. In terms of assembly, NDH is composed of at least 16 different subunits, 5 of which are encoded in the nucleus.

Its subcellular location is the plastid. The protein localises to the chloroplast thylakoid membrane. The catalysed reaction is a plastoquinone + NADH + (n+1) H(+)(in) = a plastoquinol + NAD(+) + n H(+)(out). It catalyses the reaction a plastoquinone + NADPH + (n+1) H(+)(in) = a plastoquinol + NADP(+) + n H(+)(out). Its function is as follows. NDH shuttles electrons from NAD(P)H:plastoquinone, via FMN and iron-sulfur (Fe-S) centers, to quinones in the photosynthetic chain and possibly in a chloroplast respiratory chain. The immediate electron acceptor for the enzyme in this species is believed to be plastoquinone. Couples the redox reaction to proton translocation, and thus conserves the redox energy in a proton gradient. The protein is NAD(P)H-quinone oxidoreductase subunit 3, chloroplastic of Phaseolus vulgaris (Kidney bean).